The chain runs to 259 residues: Ubiquinone/menaquinone biosynthesis C-methyltransferase UbiE (259 aa).

Residues Thr82, Asp103, and 131–132 (NA) each bind S-adenosyl-L-methionine.

Belongs to the class I-like SAM-binding methyltransferase superfamily. MenG/UbiE family.

The catalysed reaction is a 2-demethylmenaquinol + S-adenosyl-L-methionine = a menaquinol + S-adenosyl-L-homocysteine + H(+). It catalyses the reaction a 2-methoxy-6-(all-trans-polyprenyl)benzene-1,4-diol + S-adenosyl-L-methionine = a 5-methoxy-2-methyl-3-(all-trans-polyprenyl)benzene-1,4-diol + S-adenosyl-L-homocysteine + H(+). The protein operates within quinol/quinone metabolism; menaquinone biosynthesis; menaquinol from 1,4-dihydroxy-2-naphthoate: step 2/2. It participates in cofactor biosynthesis; ubiquinone biosynthesis. Methyltransferase required for the conversion of demethylmenaquinol (DMKH2) to menaquinol (MKH2) and the conversion of 2-polyprenyl-6-methoxy-1,4-benzoquinol (DDMQH2) to 2-polyprenyl-3-methyl-6-methoxy-1,4-benzoquinol (DMQH2). The polypeptide is Ubiquinone/menaquinone biosynthesis C-methyltransferase UbiE (Agrobacterium fabrum (strain C58 / ATCC 33970) (Agrobacterium tumefaciens (strain C58))).